The chain runs to 209 residues: Kynurenine formamidase (209 aa).

Residue Trp20 participates in substrate binding. Zn(2+) contacts are provided by His50, His54, and Asp56. His60 (proton donor/acceptor) is an active-site residue. Residues His161 and Glu173 each coordinate Zn(2+).

This sequence belongs to the Cyclase 1 superfamily. KynB family. In terms of assembly, homodimer. Requires Zn(2+) as cofactor.

It catalyses the reaction N-formyl-L-kynurenine + H2O = L-kynurenine + formate + H(+). It functions in the pathway amino-acid degradation; L-tryptophan degradation via kynurenine pathway; L-kynurenine from L-tryptophan: step 2/2. In terms of biological role, catalyzes the hydrolysis of N-formyl-L-kynurenine to L-kynurenine, the second step in the kynurenine pathway of tryptophan degradation. The protein is Kynurenine formamidase of Bacillus anthracis.